A 1708-amino-acid chain; its full sequence is Rapamycin-insensitive companion of mTOR (1708 aa).

The tract at residues 1–789 is interaction with NBN; sequence MAAIGRGRSL…DKANLHALIQ (789 aa). Phosphoserine is present on residues Ser-21, Ser-35, and Ser-265. Residue Lys-274 forms a Glycyl lysine isopeptide (Lys-Gly) (interchain with G-Cter in ubiquitin) linkage. A ribosome-binding domain region spans residues 521-570; that stretch reads LKDTEEALLINLRDSQVLQHKENLDWDWNLIGTILKWPNVNLRNYKDEQL. Positions 543, 572, and 576 each coordinate ATP. The segment covering 1021–1043 has biased composition (low complexity); it reads TLSLNSESTSSRHNSESESAPSS. Residues 1021-1045 form a disordered region; the sequence is TLSLNSESTSSRHNSESESAPSSMF. An N6-acetyllysine mark is found at Lys-1092 and Lys-1095. Disordered stretches follow at residues 1101 to 1198 and 1218 to 1247; these read SLTL…ENTS and SFNT…PTAM. Thr-1103 carries the post-translational modification Phosphothreonine. Lys-1116, Lys-1119, and Lys-1125 each carry N6-acetyllysine. Thr-1135 is subject to Phosphothreonine; by RPS6KB1. The residue at position 1138 (Ser-1138) is a Phosphoserine. Residues 1147-1158 show a composition bias toward polar residues; the sequence is FTSSSAQKSLQL. Residues Ser-1161, Ser-1218, and Ser-1234 each carry the phosphoserine modification. Low complexity predominate over residues 1221-1239; sequence TDTTTSGISSMSSSPSRET. At Thr-1270 the chain carries Phosphothreonine. Phosphoserine occurs at positions 1273, 1277, 1281, and 1283. Thr-1294 bears the Phosphothreonine mark. 2 positions are modified to phosphoserine: Ser-1301 and Ser-1312. Phosphothreonine is present on Thr-1331. Residues Ser-1345 and Ser-1352 each carry the phosphoserine modification. Position 1375 is a phosphothreonine (Thr-1375). Ser-1384 carries the post-translational modification Phosphoserine. Tyr-1385 carries the post-translational modification Phosphotyrosine. A phosphoserine mark is found at Ser-1387, Ser-1395, and Ser-1410. Zn(2+)-binding residues include His-1514, Cys-1519, and Cys-1522. A phosphoserine mark is found at Ser-1570, Ser-1573, Ser-1576, and Ser-1591. Residue Cys-1651 coordinates Zn(2+).

It belongs to the RICTOR family. As to quaternary structure, component of the mechanistic target of rapamycin complex 2 (mTORC2), consisting in two heterotretramers composed of MTOR, MLST8, RICTOR and MAPKAP1/SIN1. The mTORC2 core complex associates with PRR5/PROTOR1 and/or PRR5L/PROTOR2. Contrary to mTORC1, mTORC2 does not bind to and is not sensitive to FKBP12-rapamycin. Binds directly to MTOR and PRR5 within the TORC2 complex; interaction with MTOR is enhanced by deubiquitination of RICTOR by USP9X. Interaction with MAPKAP1 is not enhanced by RICTOR deubiquitination by USP9X. Interacts with CCDC28B. Interacts with NBN. Interacts with SIK3. Interacts with NCKAP1L. Interacts with ARMH4 (via cytoplasmic tail); this interaction bridges ARMH4 to the mTORC2 complex and inhibits the mTORC2 kinase activity. Interacts with UBXN2A. Interacts with TSPAN8. In terms of processing, phosphorylated by MTOR; when part of mTORC2. Phosphorylated at Thr-1135 by RPS6KB1 downstream of the mTORC1 complex: phosphorylation of RICTOR inhibits mTORC2 signaling by creating a binding site for 14-3-3 proteins. Phosphorylated at Ser-1234 by GSK3B in response to endoplasmic stress, inhibiting mTORC2 signaling. Post-translationally, ubiquitinated by the SCF(FBXW7) complex, leading to its degradation by the proteasome. Deubiquitinated by USP9X; deubiquitination stabilizes RICTOR and enhances its binding to MTOR, thus promoting mTORC2 complex assembly. Acetylated by EP300/p300 in response to glucose, leading to activate the mTORC2 complex. Acetylation by BLOC1S1/GCN5L1 in response to hypotoxic stress protects RICTOR against ubiquitination and subsequent degradation by the proteasome. As to expression, highest levels in liver and brain with expression also detected in heart, muscle, spleen and kidney (at protein level).

The protein resides in the cell membrane. It is found in the endoplasmic reticulum membrane. Its subcellular location is the lysosome membrane. In terms of biological role, component of the mechanistic target of rapamycin complex 2 (mTORC2), which transduces signals from growth factors to pathways involved in proliferation, cytoskeletal organization, lipogenesis and anabolic output. In response to growth factors, mTORC2 phosphorylates and activates AGC protein kinase family members, including AKT (AKT1, AKT2 and AKT3), PKC (PRKCA, PRKCB and PRKCE) and SGK1. In contrast to mTORC1, mTORC2 is nutrient-insensitive. Within the mTORC2 complex, RICTOR probably acts as a molecular adapter. RICTOR is responsible for the FKBP12-rapamycin-insensitivity of mTORC2. mTORC2 plays a critical role in AKT1 activation by mediating phosphorylation of different sites depending on the context, such as 'Thr-450', 'Ser-473', 'Ser-477' or 'Thr-479', facilitating the phosphorylation of the activation loop of AKT1 on 'Thr-308' by PDPK1/PDK1 which is a prerequisite for full activation. mTORC2 catalyzes the phosphorylation of SGK1 at 'Ser-422' and of PRKCA on 'Ser-657'. The mTORC2 complex also phosphorylates various proteins involved in insulin signaling, such as FBXW8 and IGF2BP1. mTORC2 acts upstream of Rho GTPases to regulate the actin cytoskeleton, probably by activating one or more Rho-type guanine nucleotide exchange factors. mTORC2 promotes the serum-induced formation of stress-fibers or F-actin. Plays an essential role in embryonic growth and development. In Mus musculus (Mouse), this protein is Rapamycin-insensitive companion of mTOR.